Here is a 120-residue protein sequence, read N- to C-terminus: NAD(P)H-quinone oxidoreductase subunit 3, chloroplastic (120 aa).

The next 3 membrane-spanning stretches (helical) occupy residues 9–29 (FFWA…LISG), 64–84 (MFAL…PWAM), and 88–108 (VLGV…IIGL).

This sequence belongs to the complex I subunit 3 family. NDH is composed of at least 16 different subunits, 5 of which are encoded in the nucleus.

Its subcellular location is the plastid. The protein localises to the chloroplast thylakoid membrane. The catalysed reaction is a plastoquinone + NADH + (n+1) H(+)(in) = a plastoquinol + NAD(+) + n H(+)(out). It catalyses the reaction a plastoquinone + NADPH + (n+1) H(+)(in) = a plastoquinol + NADP(+) + n H(+)(out). Its function is as follows. NDH shuttles electrons from NAD(P)H:plastoquinone, via FMN and iron-sulfur (Fe-S) centers, to quinones in the photosynthetic chain and possibly in a chloroplast respiratory chain. The immediate electron acceptor for the enzyme in this species is believed to be plastoquinone. Couples the redox reaction to proton translocation, and thus conserves the redox energy in a proton gradient. This Nicotiana tabacum (Common tobacco) protein is NAD(P)H-quinone oxidoreductase subunit 3, chloroplastic.